A 383-amino-acid polypeptide reads, in one-letter code: Acetylornithine deacetylase (383 aa).

A Zn(2+)-binding site is contributed by His-80. Residue Asp-82 is part of the active site. Asp-112 contributes to the Zn(2+) binding site. Glu-144 is an active-site residue. Zn(2+)-binding residues include Glu-145, Glu-169, and His-355.

This sequence belongs to the peptidase M20A family. ArgE subfamily. In terms of assembly, homodimer. Zn(2+) serves as cofactor. It depends on Co(2+) as a cofactor. Glutathione is required as a cofactor.

It is found in the cytoplasm. It catalyses the reaction N(2)-acetyl-L-ornithine + H2O = L-ornithine + acetate. It functions in the pathway amino-acid biosynthesis; L-arginine biosynthesis; L-ornithine from N(2)-acetyl-L-ornithine (linear): step 1/1. In terms of biological role, catalyzes the hydrolysis of the amide bond of N(2)-acetylated L-amino acids. Cleaves the acetyl group from N-acetyl-L-ornithine to form L-ornithine, an intermediate in L-arginine biosynthesis pathway, and a branchpoint in the synthesis of polyamines. In Salmonella paratyphi A (strain ATCC 9150 / SARB42), this protein is Acetylornithine deacetylase.